The sequence spans 87 residues: UPF0250 protein YPK_3025 (87 aa).

The protein belongs to the UPF0250 family.

This chain is UPF0250 protein YPK_3025, found in Yersinia pseudotuberculosis serotype O:3 (strain YPIII).